The primary structure comprises 159 residues: Ribosomal RNA large subunit methyltransferase H (159 aa).

S-adenosyl-L-methionine contacts are provided by Leu76 and Gly108.

This sequence belongs to the RNA methyltransferase RlmH family. Homodimer.

It is found in the cytoplasm. The catalysed reaction is pseudouridine(1915) in 23S rRNA + S-adenosyl-L-methionine = N(3)-methylpseudouridine(1915) in 23S rRNA + S-adenosyl-L-homocysteine + H(+). Its function is as follows. Specifically methylates the pseudouridine at position 1915 (m3Psi1915) in 23S rRNA. The sequence is that of Ribosomal RNA large subunit methyltransferase H from Pediococcus pentosaceus (strain ATCC 25745 / CCUG 21536 / LMG 10740 / 183-1w).